Reading from the N-terminus, the 762-residue chain is 5-methyltetrahydropteroyltriglutamate--homocysteine methyltransferase (762 aa).

Residues Arg18–Lys21 and Lys112 contribute to the 5-methyltetrahydropteroyltri-L-glutamate site. L-homocysteine-binding positions include Ile435–Ser437 and Glu488. L-methionine-binding positions include Ile435–Ser437 and Glu488. 5-methyltetrahydropteroyltri-L-glutamate is bound by residues Arg519–Cys520 and Trp565. Asp603 is a binding site for L-homocysteine. L-methionine is bound at residue Asp603. 5-methyltetrahydropteroyltri-L-glutamate is bound at residue Glu609. Zn(2+) is bound by residues His645, Cys647, and Glu669. His698 acts as the Proton donor in catalysis. Cys730 lines the Zn(2+) pocket.

It belongs to the vitamin-B12 independent methionine synthase family. Zn(2+) is required as a cofactor.

It carries out the reaction 5-methyltetrahydropteroyltri-L-glutamate + L-homocysteine = tetrahydropteroyltri-L-glutamate + L-methionine. The protein operates within amino-acid biosynthesis; L-methionine biosynthesis via de novo pathway; L-methionine from L-homocysteine (MetE route): step 1/1. Functionally, catalyzes the transfer of a methyl group from 5-methyltetrahydrofolate to homocysteine resulting in methionine formation. The sequence is that of 5-methyltetrahydropteroyltriglutamate--homocysteine methyltransferase from Bacillus velezensis (strain DSM 23117 / BGSC 10A6 / LMG 26770 / FZB42) (Bacillus amyloliquefaciens subsp. plantarum).